The following is a 233-amino-acid chain: Large ribosomal subunit protein uL1 (233 aa).

It belongs to the universal ribosomal protein uL1 family. In terms of assembly, part of the 50S ribosomal subunit.

Binds directly to 23S rRNA. The L1 stalk is quite mobile in the ribosome, and is involved in E site tRNA release. Functionally, protein L1 is also a translational repressor protein, it controls the translation of the L11 operon by binding to its mRNA. The chain is Large ribosomal subunit protein uL1 from Rhizobium johnstonii (strain DSM 114642 / LMG 32736 / 3841) (Rhizobium leguminosarum bv. viciae).